Here is a 260-residue protein sequence, read N- to C-terminus: 3-methyl-2-oxobutanoate hydroxymethyltransferase (260 aa).

Residues Asp44 and Asp83 each contribute to the Mg(2+) site. 3-methyl-2-oxobutanoate-binding positions include 44-45 (DS), Asp83, and Lys113. Glu115 is a Mg(2+) binding site. Residue Glu183 is the Proton acceptor of the active site.

Belongs to the PanB family. Homodecamer; pentamer of dimers. Mg(2+) is required as a cofactor.

It is found in the cytoplasm. It catalyses the reaction 3-methyl-2-oxobutanoate + (6R)-5,10-methylene-5,6,7,8-tetrahydrofolate + H2O = 2-dehydropantoate + (6S)-5,6,7,8-tetrahydrofolate. The protein operates within cofactor biosynthesis; (R)-pantothenate biosynthesis; (R)-pantoate from 3-methyl-2-oxobutanoate: step 1/2. In terms of biological role, catalyzes the reversible reaction in which hydroxymethyl group from 5,10-methylenetetrahydrofolate is transferred onto alpha-ketoisovalerate to form ketopantoate. This Gloeobacter violaceus (strain ATCC 29082 / PCC 7421) protein is 3-methyl-2-oxobutanoate hydroxymethyltransferase.